The following is a 353-amino-acid chain: Quinolinate synthase (353 aa).

Residues histidine 47 and serine 68 each contribute to the iminosuccinate site. Residue cysteine 113 participates in [4Fe-4S] cluster binding. Residues 139-141 (YAN) and serine 156 contribute to the iminosuccinate site. Cysteine 200 serves as a coordination point for [4Fe-4S] cluster. Iminosuccinate-binding positions include 226 to 228 (HPE) and threonine 243. [4Fe-4S] cluster is bound at residue cysteine 297.

Belongs to the quinolinate synthase family. Type 1 subfamily. The cofactor is [4Fe-4S] cluster.

The protein resides in the cytoplasm. The enzyme catalyses iminosuccinate + dihydroxyacetone phosphate = quinolinate + phosphate + 2 H2O + H(+). The protein operates within cofactor biosynthesis; NAD(+) biosynthesis; quinolinate from iminoaspartate: step 1/1. Its function is as follows. Catalyzes the condensation of iminoaspartate with dihydroxyacetone phosphate to form quinolinate. This is Quinolinate synthase from Vibrio vulnificus (strain CMCP6).